Consider the following 770-residue polypeptide: tRNA(Met) cytidine acetyltransferase TmcA 2 (770 aa).

ATP-binding residues include glutamine 209 and arginine 390. The N-acetyltransferase domain occupies 458-608 (MIMLDGIHHK…YPVVVIRPIS (151 aa)). Residue 533–535 (IAV) participates in acetyl-CoA binding.

This sequence belongs to the TmcA family.

Its subcellular location is the cytoplasm. It carries out the reaction cytidine(34) in elongator tRNA(Met) + acetyl-CoA + ATP + H2O = N(4)-acetylcytidine(34) in elongator tRNA(Met) + ADP + phosphate + CoA + H(+). It catalyses the reaction a cytidine in RNA + acetyl-CoA + ATP + H2O = an N(4)-acetylcytidine in RNA + ADP + phosphate + CoA + H(+). The enzyme catalyses a cytidine in tRNA + acetyl-CoA + ATP + H2O = an N(4)-acetylcytidine in tRNA + ADP + phosphate + CoA + H(+). The catalysed reaction is a cytidine in mRNA + acetyl-CoA + ATP + H2O = an N(4)-acetylcytidine in mRNA + ADP + phosphate + CoA + H(+). In terms of biological role, catalyzes the formation of N(4)-acetylcytidine (ac(4)C) at the wobble position of tRNA(Met), by using acetyl-CoA as an acetyl donor and ATP (or GTP). Catalyzes the formation of 41 N(4)-acetylcytidine (ac(4)C) sites in RNA, almost always on the middle C of a CCG motif. Modifications are found mostly in tRNA, with small amounts found in rRNA and mRNA. The sequence is that of tRNA(Met) cytidine acetyltransferase TmcA 2 from Saccharolobus solfataricus (strain ATCC 35092 / DSM 1617 / JCM 11322 / P2) (Sulfolobus solfataricus).